We begin with the raw amino-acid sequence, 871 residues long: Transient receptor potential cation channel subfamily V member 4 (871 aa).

Residues 1–68 (MADSSEGPRA…GPGDGRPNLR (68 aa)) are disordered. The Cytoplasmic portion of the chain corresponds to 1–469 (MADSSEGPRA…RDKWRKFGAV (469 aa)). Tyr110 carries the phosphotyrosine modification. ATP contacts are provided by residues Lys192, Lys197, Asn201, 236–239 (YRGQ), and Arg248. ANK repeat units follow at residues 237-266 (RGQT…DVHA) and 284-313 (FGEL…KKAD). 249 to 251 (RCK) is an a 1,2-diacyl-sn-glycero-3-phospho-(1D-myo-inositol-4,5-bisphosphate) binding site. Tyr253 carries the post-translational modification Phosphotyrosine. Residues 296-299 (NQPH) and Lys344 each bind a 1,2-diacyl-sn-glycero-3-phospho-(1D-myo-inositol-4,5-bisphosphate). Residues 369–398 (DGLSPLMMAAKTGKIGIFQHIIRREVTDED) form an ANK 3 repeat. Residues 470-490 (SFYINVVSYLCAMVIFTLTAY) form a helical membrane-spanning segment. Residues 491-507 (YQPLEGTPPYPYRTTVD) are Extracellular-facing. A helical transmembrane segment spans residues 508-534 (YLRLAGEVITLFTGVLFFFTNIKDLFM). The Cytoplasmic segment spans residues 535–547 (KKCPGVNSLFIDG). A helical transmembrane segment spans residues 548-568 (SFQLLYFIYSVLVIVSAALYL). At 569–572 (AGIE) the chain is on the extracellular side. The helical transmembrane segment at 573–593 (AYLAVMVFALVLGWMNALYFT) threads the bilayer. Residues 594-608 (RGLKLTGTYSIMIQK) are Cytoplasmic-facing. Residues 609–636 (ILFKDLFRFLLVYLLFMIGYASALVSLL) form a helical membrane-spanning segment. At 637–665 (NPCANMKVCNEDQTNCTVPTYPSCRDSET) the chain is on the extracellular side. Positions 666–685 (FSTFLLDLFKLTIGMGDLEM) form an intramembrane region, pore-forming. A Selectivity filter motif is present at residues 679 to 682 (GMGD). Asp682 is a Ca(2+) binding site. Topologically, residues 686-693 (LSSTKYPV) are extracellular. A helical transmembrane segment spans residues 694-722 (VFIILLVTYIILTFVLLLNMLIALMGETV). Residues 723 to 871 (GQVSKESKHI…RKWRTDDAPL (149 aa)) are Cytoplasmic-facing. Tyr805 carries the phosphotyrosine modification. The interval 812 to 831 (HTVGRLRRDRWSSVVPRVVE) is interaction with calmodulin and ITPR3. Ser824 carries the post-translational modification Phosphoserine. A disordered region spans residues 849–871 (GNPRCDGHQQGYPRKWRTDDAPL).

It belongs to the transient receptor (TC 1.A.4) family. TrpV subfamily. TRPV4 sub-subfamily. In terms of assembly, homotetramer. Self-associates in an isoform-specific manner. Isoform 1 and isoform 5 can oligomerize, but isoform 2, isoform 4 and isoform 6 cannot oligomerize. Interacts with calmodulin. Interacts with Map7 and Src family Tyr protein kinases LYN, SRC, FYN, HCK, LCK and YES. Interacts with CTNNB1. The TRPV4 and CTNNB1 complex can interact with CDH1. Interacts with PACSIN1, PACSIN2 and PACSIN3 (via SH3 domain). Part of a complex containing MLC1, AQP4, HEPACAM and ATP1B1. Interacts with ITPR3. Interacts with AQP5; the interaction is probably indirect and regulates TRPV4 activation by hypotonicity. Interacts with ANO1. Interacts (via C-terminus) with PKD2 (via C-terminus). Interacts with DDX3X; this interaction is decreased when the channel is activated. In terms of processing, N-glycosylated. In terms of tissue distribution, found in the synoviocytes from patients with (RA) and without (CTR) rheumatoid arthritis (at protein level).

It localises to the cell membrane. The protein localises to the apical cell membrane. The protein resides in the cell junction. It is found in the adherens junction. Its subcellular location is the cell projection. It localises to the cilium. The protein localises to the endoplasmic reticulum. It catalyses the reaction Ca(2+)(in) = Ca(2+)(out). With respect to regulation, channel activation is inhibited by binding to phosphatidylinositol-4,5-bisphosphate, and to a much lesser degree by phosphatidylinositol-3,4,5-trisphosphate. Not inhibited by phosphatidylinositol-3,4-bisphosphate and phosphatidylinositol-3,5-bisphosphate. Functionally, non-selective calcium permeant cation channel involved in osmotic sensitivity and mechanosensitivity. Activation by exposure to hypotonicity within the physiological range exhibits an outward rectification. Also activated by heat, low pH, citrate and phorbol esters. Increase of intracellular Ca(2+) potentiates currents. Channel activity seems to be regulated by a calmodulin-dependent mechanism with a negative feedback mechanism. Promotes cell-cell junction formation in skin keratinocytes and plays an important role in the formation and/or maintenance of functional intercellular barriers. Acts as a regulator of intracellular Ca(2+) in synoviocytes. Plays an obligatory role as a molecular component in the nonselective cation channel activation induced by 4-alpha-phorbol 12,13-didecanoate and hypotonic stimulation in synoviocytes and also regulates production of IL-8. Together with PKD2, forms mechano- and thermosensitive channels in cilium. Negatively regulates expression of PPARGC1A, UCP1, oxidative metabolism and respiration in adipocytes. Regulates expression of chemokines and cytokines related to pro-inflammatory pathway in adipocytes. Together with AQP5, controls regulatory volume decrease in salivary epithelial cells. Required for normal development and maintenance of bone and cartilage. In its inactive state, may sequester DDX3X at the plasma membrane. When activated, the interaction between both proteins is affected and DDX3X relocalizes to the nucleus. In neurons of the central nervous system, could play a role in triggering voluntary water intake in response to increased sodium concentration in body fluid. Non-selective calcium permeant cation channel involved in osmotic sensitivity and mechanosensitivity. Activation by exposure to hypotonicity within the physiological range exhibits an outward rectification. Also activated by phorbol esters. Has the same channel activity as isoform 1, and is activated by the same stimuli. In terms of biological role, lacks channel activity, due to impaired oligomerization and intracellular retention. Its function is as follows. (Microbial infection) Facilitates hepatitis C virus (HCV) replication, possibly through its action on DDX3X. Functionally, (Microbial infection) Facilitates Dengue virus (DENV) replication, possibly through its action on DDX3X. (Microbial infection) Facilitates Zika virus (ZIKV) replication, possibly through its action on DDX3X. This chain is Transient receptor potential cation channel subfamily V member 4 (TRPV4), found in Homo sapiens (Human).